The chain runs to 493 residues: Glutamyl-tRNA(Gln) amidotransferase subunit A (493 aa).

Residues Lys-79 and Ser-159 each act as charge relay system in the active site. Ser-183 acts as the Acyl-ester intermediate in catalysis.

It belongs to the amidase family. GatA subfamily. In terms of assembly, heterotrimer of A, B and C subunits.

The catalysed reaction is L-glutamyl-tRNA(Gln) + L-glutamine + ATP + H2O = L-glutaminyl-tRNA(Gln) + L-glutamate + ADP + phosphate + H(+). In terms of biological role, allows the formation of correctly charged Gln-tRNA(Gln) through the transamidation of misacylated Glu-tRNA(Gln) in organisms which lack glutaminyl-tRNA synthetase. The reaction takes place in the presence of glutamine and ATP through an activated gamma-phospho-Glu-tRNA(Gln). In Brucella anthropi (strain ATCC 49188 / DSM 6882 / CCUG 24695 / JCM 21032 / LMG 3331 / NBRC 15819 / NCTC 12168 / Alc 37) (Ochrobactrum anthropi), this protein is Glutamyl-tRNA(Gln) amidotransferase subunit A.